Reading from the N-terminus, the 457-residue chain is MPIATINPATGETVKTFTAATDDEVDAAIARAHRRFADYRQTSFAQRARWANATADLLEAEADQAAAMMTLEMGKTLAAAKAEALKCAKGFRYYAENAEALLADEPADAAKVGASAAYGRYQPLGVILAVMPWNFPLWQAVRFAAPALMAGNVGLLKHASNVPQCALYLADVIARGGFPDGCFQTLLVSSGAVEAILRDPRVAAATLTGSEPAGQSVGAIAGNEIKPTVLELGGSDPFIVMPSADLDAAVSTAVTGRVQNNGQSCIAAKRFIVHADIYDDFVDKFVARMAALRVGDPTDPDTDVGPLATEQGRNEVAKQVEDAAAAGAVIRCGGKRLDRPGWFYPPTVITDISKDMALYTEEVFGPVASVFRAANIDEAVEIANATTFGLGSNAWTRDETEQRRFIDDIVAGQVFINGMTVSYPELPFGGVKRSGYGRELSAHGIREFCNIKTVWIA.

209-214 (GSEPAG) lines the NADP(+) pocket. Active-site residues include glutamate 231 and cysteine 265.

It belongs to the aldehyde dehydrogenase family.

It carries out the reaction succinate semialdehyde + NAD(+) + H2O = succinate + NADH + 2 H(+). The enzyme catalyses succinate semialdehyde + NADP(+) + H2O = succinate + NADPH + 2 H(+). Functionally, catalyzes the NADP(+)-dependent oxidation of succinate semialdehyde to succinate. It is believed to be the main source of succinate semialdehyde dehydrogenase activity in Mycobacterium. This is Succinate-semialdehyde dehydrogenase [NADP(+)] 1 (gabD1) from Mycobacterium bovis (strain ATCC BAA-935 / AF2122/97).